A 191-amino-acid polypeptide reads, in one-letter code: Cytochrome b-245 light chain (191 aa).

Residues 2-7 (GQIEWA) are Cytoplasmic-facing. The chain crosses the membrane as a helical span at residues 8 to 30 (MWANEQALASGLILITGGIVATA). Residues 31–35 (GQFTQ) are Extracellular-facing. A helical membrane pass occupies residues 36–53 (WYLGAYSIAAGVLVCLLE). At 54-69 (YPRGKRSKGSTMERCG) the chain is on the cytoplasmic side. The stretch at 70–80 (QKYLTRVVKLF) is an intramembrane region. Over 81–86 (GPLTRN) the chain is Cytoplasmic. Residues 87 to 104 (YYIRAFLHLGLAVPAGFL) traverse the membrane as a helical segment. Residue leucine 105 is a topological domain, extracellular. Residues 106–126 (ATILGTACLAIASGIYLLAAI) traverse the membrane as a helical segment. The Cytoplasmic portion of the chain corresponds to 127–191 (RGEQWSPIEP…NPMPVNDEVV (65 aa)). The disordered stretch occupies residues 134–191 (IEPKPKERPQIGGTIKQPPSNPPPRPPAEARKKLSEEAAGVPTGGPQENPMPVNDEVV). Position 147 is a phosphothreonine (threonine 147). Lysine 149 participates in a covalent cross-link: Glycyl lysine isopeptide (Lys-Gly) (interchain with G-Cter in ubiquitin). Serine 168 bears the Phosphoserine mark.

This sequence belongs to the p22phox family. In terms of assembly, component of the phagocyte NADPH oxidase core complex/cytochrome b558 complex, composed of CYBB (heavy chain (beta)) and CYBA (light chain (alpha)). Component of the phagocyte NADPH oxidase complex composed of an obligatory core heterodimer formed by the membrane proteins CYBA and CYBB and the cytosolic regulatory subunits NCF1/p47-phox, NCF2/p67-phox, NCF4/p40-phox and the small GTPase RAC1 or RAC2. Interacts with NCF1 (via SH3 domain). Interacts with SH3PXD2A. Interacts with DUOX1, DUOX2 and TPO. Interacts with NOX4; this interaction mediates superoxide generation. Interacts with calprotectin (S100A8/9). Interacts with GBP7. Interacts with NOXO1. Forms a heterodimer with NOX3 and is essential for activity and cell membrane localization of NOX3. Interacts with NOX1. Phosphorylation at Thr-147 enhances NADPH oxidase activity by promoting NCF1/p47-phox binding. In terms of processing, ubiquitinated at Lys-149 likely by RNF145.

The protein resides in the cell membrane. Its function is as follows. Subunit of NADPH oxidase complexes that is required for the NADPH oxidase activity that generates, in various cell types, superoxide from molecular oxygen utilizing NADPH as an electron donor. Subunit of the phagocyte NADPH oxidase complex that mediates the transfer of electrons from cytosolic NADPH to O2 to produce the superoxide anion (O2(-)). In the activated complex, electrons are first transferred from NADPH to flavin adenine dinucleotide (FAD) and subsequently transferred via two heme molecules to molecular oxygen, producing superoxide through an outer-sphere reaction. Activation of the NADPH oxidase complex is initiated by the assembly of cytosolic subunits of the NADPH oxidase complex with the core NADPH oxidase complex to form a complex at the plasma membrane or phagosomal membrane. This activation process is initiated by phosphorylation dependent binding of the cytosolic NCF1/p47-phox subunit to the C-terminus of CYBA/p22-phox. Aassociates with NOX3 to form a functional NADPH oxidase constitutively generating superoxide. The sequence is that of Cytochrome b-245 light chain from Bison bison (American bison).